A 174-amino-acid chain; its full sequence is Alpha-crystallin B chain (174 aa).

Residue Met1 is modified to N-acetylmethionine. Residues 55-163 (RMPSWLETGL…PERSIPITRE (109 aa)) form the sHSP domain. Positions 82, 103, 105, and 110 each coordinate Zn(2+). A disordered region spans residues 148-174 (RKQSDVPERSIPITREEKPAIAGSQRK). A compositionally biased stretch (basic and acidic residues) spans 149–166 (KQSDVPERSIPITREEKP).

This sequence belongs to the small heat shock protein (HSP20) family. In terms of assembly, heteromer composed of three CRYAA and one CRYAB subunits. Aggregates with homologous proteins, including the small heat shock protein HSPB1, to form large heteromeric complexes. Inter-subunit bridging via zinc ions enhances stability, which is crucial as there is no protein turn over in the lens. As to expression, lens as well as other tissues.

Its function is as follows. May contribute to the transparency and refractive index of the lens. This Gallus gallus (Chicken) protein is Alpha-crystallin B chain (CRYAB).